A 679-amino-acid chain; its full sequence is UvrABC system protein B (679 aa).

The 388-residue stretch at glutamine 25–arginine 412 folds into the Helicase ATP-binding domain. Glycine 38–threonine 45 contributes to the ATP binding site. The short motif at tyrosine 91–isoleucine 114 is the Beta-hairpin element. Positions glutamine 429–threonine 583 constitute a Helicase C-terminal domain. Positions proline 639–lysine 674 constitute a UVR domain.

This sequence belongs to the UvrB family. In terms of assembly, forms a heterotetramer with UvrA during the search for lesions. Interacts with UvrC in an incision complex.

The protein resides in the cytoplasm. Functionally, the UvrABC repair system catalyzes the recognition and processing of DNA lesions. A damage recognition complex composed of 2 UvrA and 2 UvrB subunits scans DNA for abnormalities. Upon binding of the UvrA(2)B(2) complex to a putative damaged site, the DNA wraps around one UvrB monomer. DNA wrap is dependent on ATP binding by UvrB and probably causes local melting of the DNA helix, facilitating insertion of UvrB beta-hairpin between the DNA strands. Then UvrB probes one DNA strand for the presence of a lesion. If a lesion is found the UvrA subunits dissociate and the UvrB-DNA preincision complex is formed. This complex is subsequently bound by UvrC and the second UvrB is released. If no lesion is found, the DNA wraps around the other UvrB subunit that will check the other stand for damage. The polypeptide is UvrABC system protein B (Prochlorococcus marinus subsp. pastoris (strain CCMP1986 / NIES-2087 / MED4)).